The following is a 304-amino-acid chain: MKKKLLSVAAVASVFTLAACGSNDEAVINYKGGEVNKADVQDEAYQKAGAQIAFQQTMNKLLEKEYGKKVTDKEVEAEVKKTKDQFPDKEQFNTTLQTAGIKNEKEFEKVLRTQMLLKEAKSAKSKVTDKEIEDRFNQEKVEVKASHILVEKESEAKAIKKQLDEGGDFAKIAKAKSTDTGSATKGGDLGYFTKGKMVEEFENYAFKDGVEGKISDPIKTQFGYHIIKVTDRKEKKDFTLEKESDRIKKALAEEKSAQVNPNDIYRSLMKKYDVKVENKDFKDAFDLDKQEQQQMQQQMQQQQQ.

Residues 1–19 form the signal peptide; it reads MKKKLLSVAAVASVFTLAA. A lipid anchor (N-palmitoyl cysteine) is attached at cysteine 20. The S-diacylglycerol cysteine moiety is linked to residue cysteine 20. The PpiC domain occupies 140–231; that stretch reads KVEVKASHIL…FGYHIIKVTD (92 aa). The disordered stretch occupies residues 285–304; it reads FDLDKQEQQQMQQQMQQQQQ. Positions 292 to 304 are enriched in low complexity; it reads QQQMQQQMQQQQQ.

It belongs to the PrsA family.

It is found in the cell membrane. The catalysed reaction is [protein]-peptidylproline (omega=180) = [protein]-peptidylproline (omega=0). Plays a major role in protein secretion by helping the post-translocational extracellular folding of several secreted proteins. This is Foldase protein PrsA from Exiguobacterium sibiricum (strain DSM 17290 / CCUG 55495 / CIP 109462 / JCM 13490 / 255-15).